We begin with the raw amino-acid sequence, 21 residues long: Snake venom serine protease jerdonase (21 aa).

The Peptidase S1 domain occupies 1 to 21; the sequence is IIGGDECNINEHPFLVALYDA.

The protein belongs to the peptidase S1 family. Snake venom subfamily. In terms of assembly, monomer. Post-translationally, glycosylated; contains 35.8% neutral carbohydrate. In terms of tissue distribution, expressed by the venom gland.

It is found in the secreted. With respect to regulation, inhibited by PMSF and soybean trypsin inhibitor. Partially inhibited by L-cysteine and DTT. Not affected by EDTA. In terms of biological role, multifunctional venom serine protease that has fibrino(geno)lytic activity towards the A alpha-chain of human fibrinogen (FGA) and a slow activity towards the B beta-chain (FGB). Also hydrolyzes bovine low-molecular-mass kininogen and releases bradykinin. Catalyzes the hydrolysis of BAEE, S-2238 and S-2302. This Protobothrops jerdonii (Jerdon's pitviper) protein is Snake venom serine protease jerdonase.